We begin with the raw amino-acid sequence, 209 residues long: Nucleoside triphosphate pyrophosphatase (209 aa).

Aspartate 79 functions as the Proton acceptor in the catalytic mechanism.

The protein belongs to the Maf family. A divalent metal cation is required as a cofactor.

It is found in the cytoplasm. It catalyses the reaction a ribonucleoside 5'-triphosphate + H2O = a ribonucleoside 5'-phosphate + diphosphate + H(+). The catalysed reaction is a 2'-deoxyribonucleoside 5'-triphosphate + H2O = a 2'-deoxyribonucleoside 5'-phosphate + diphosphate + H(+). Functionally, nucleoside triphosphate pyrophosphatase. May have a dual role in cell division arrest and in preventing the incorporation of modified nucleotides into cellular nucleic acids. This chain is Nucleoside triphosphate pyrophosphatase, found in Mycolicibacterium gilvum (strain PYR-GCK) (Mycobacterium gilvum (strain PYR-GCK)).